We begin with the raw amino-acid sequence, 298 residues long: Bifunctional protein FolD (298 aa).

NADP(+) is bound by residues 165-167, Ser190, and Ile231; that span reads GRS.

This sequence belongs to the tetrahydrofolate dehydrogenase/cyclohydrolase family. As to quaternary structure, homodimer.

The enzyme catalyses (6R)-5,10-methylene-5,6,7,8-tetrahydrofolate + NADP(+) = (6R)-5,10-methenyltetrahydrofolate + NADPH. The catalysed reaction is (6R)-5,10-methenyltetrahydrofolate + H2O = (6R)-10-formyltetrahydrofolate + H(+). Its pathway is one-carbon metabolism; tetrahydrofolate interconversion. Catalyzes the oxidation of 5,10-methylenetetrahydrofolate to 5,10-methenyltetrahydrofolate and then the hydrolysis of 5,10-methenyltetrahydrofolate to 10-formyltetrahydrofolate. This chain is Bifunctional protein FolD, found in Prochlorococcus marinus (strain AS9601).